The sequence spans 84 residues: MDLDYCIICGKPTTGNLYCSRECHLQDCPGCGSTSEQCSYSKSADLHMLSSQYLDHFRRRSSMPSPSTSSSLLNGFVASRLAVL.

Belongs to the ecl1 family.

It is found in the nucleus. Functionally, involved in chronological cell aging. The chain is Extender of the chronological lifespan protein 2 (ecl2) from Schizosaccharomyces pombe (strain 972 / ATCC 24843) (Fission yeast).